The chain runs to 498 residues: ATP synthase subunit beta, chloroplastic (498 aa).

T6 is modified (phosphothreonine). Residue S13 is modified to Phosphoserine. An ATP-binding site is contributed by 172–179; the sequence is GGAGVGKT.

It belongs to the ATPase alpha/beta chains family. In terms of assembly, F-type ATPases have 2 components, CF(1) - the catalytic core - and CF(0) - the membrane proton channel. CF(1) has five subunits: alpha(3), beta(3), gamma(1), delta(1), epsilon(1). CF(0) has four main subunits: a(1), b(1), b'(1) and c(9-12).

Its subcellular location is the plastid. It localises to the chloroplast thylakoid membrane. It carries out the reaction ATP + H2O + 4 H(+)(in) = ADP + phosphate + 5 H(+)(out). Produces ATP from ADP in the presence of a proton gradient across the membrane. The catalytic sites are hosted primarily by the beta subunits. The polypeptide is ATP synthase subunit beta, chloroplastic (Olimarabidopsis pumila (Dwarf rocket)).